A 282-amino-acid chain; its full sequence is Phosphatidylserine decarboxylase proenzyme (282 aa).

Active-site charge relay system; for autoendoproteolytic cleavage activity residues include Asp-89, His-145, and Ser-249. Catalysis depends on Ser-249, which acts as the Schiff-base intermediate with substrate; via pyruvic acid; for decarboxylase activity. A Pyruvic acid (Ser); by autocatalysis modification is found at Ser-249.

It belongs to the phosphatidylserine decarboxylase family. PSD-B subfamily. Prokaryotic type I sub-subfamily. Heterodimer of a large membrane-associated beta subunit and a small pyruvoyl-containing alpha subunit. The cofactor is pyruvate. In terms of processing, is synthesized initially as an inactive proenzyme. Formation of the active enzyme involves a self-maturation process in which the active site pyruvoyl group is generated from an internal serine residue via an autocatalytic post-translational modification. Two non-identical subunits are generated from the proenzyme in this reaction, and the pyruvate is formed at the N-terminus of the alpha chain, which is derived from the carboxyl end of the proenzyme. The autoendoproteolytic cleavage occurs by a canonical serine protease mechanism, in which the side chain hydroxyl group of the serine supplies its oxygen atom to form the C-terminus of the beta chain, while the remainder of the serine residue undergoes an oxidative deamination to produce ammonia and the pyruvoyl prosthetic group on the alpha chain. During this reaction, the Ser that is part of the protease active site of the proenzyme becomes the pyruvoyl prosthetic group, which constitutes an essential element of the active site of the mature decarboxylase.

The protein resides in the cell membrane. The catalysed reaction is a 1,2-diacyl-sn-glycero-3-phospho-L-serine + H(+) = a 1,2-diacyl-sn-glycero-3-phosphoethanolamine + CO2. The protein operates within phospholipid metabolism; phosphatidylethanolamine biosynthesis; phosphatidylethanolamine from CDP-diacylglycerol: step 2/2. Functionally, catalyzes the formation of phosphatidylethanolamine (PtdEtn) from phosphatidylserine (PtdSer). The sequence is that of Phosphatidylserine decarboxylase proenzyme from Anaeromyxobacter sp. (strain K).